Here is a 1248-residue protein sequence, read N- to C-terminus: Cullin-associated NEDD8-dissociated protein 1 (1248 aa).

11 HEAT repeats span residues 44 to 82 (DESEKKVVRMVLKLLEDKNGEVQNLAVKCLGPLVNKVKE), 127 to 165 (PNVCQRITGKLSTAIEKEDVSVKLESLDILADLLSRFGE), 168 to 206 (VPFHSTILKALMPQLASSRQAVRKRTIVALSFLLIQANS), 365 to 403 (EDFYRSLSPALIARFKEREENVKSDIFHAYVALLKNTRL), 425 to 463 (IEQLPLIVKAIQPLMREKSMKTRQDCFLLLRELLNSLPG), 510 to 548 (HPHIPLLVPLVVTSVFDPFYKIATEALLVLQQLVKVIRP), 604 to 642 (QNELAVCLPIFMERLKNEVTRLSSVKALTLIAASSLRID), 644 to 682 (TPILHDVLPALGTFLRKNHRALKLHSLDLINKIVINYSS), 861 to 900 (DLSSIQVLPQTIIECFGATSEDVKAAASHALGAVSVGSLQ), 976 to 1014 (LVNPDELLPQLQQALRSESATMRTVVVSSVKFTISDQPQ), and 1054 to 1093 (PSLVRDLLPTLLPWLYSETKVKSELIREVEMGPFKHTVDD).

Belongs to the CAND family.

Key assembly factor of SCF (SKP1-CUL1-F-box protein) E3 ubiquitin ligase complexes that promotes the exchange of the substrate-recognition F-box subunit in SCF complexes, thereby playing a key role in the cellular repertoire of SCF complexes. Acts as a F-box protein exchange factor. Probably plays a similar role in other cullin-RING E3 ubiquitin ligase complexes. The protein is Cullin-associated NEDD8-dissociated protein 1 (Cand1) of Drosophila melanogaster (Fruit fly).